The sequence spans 344 residues: Fructose-1,6-bisphosphatase class 1 (344 aa).

Mg(2+)-binding residues include Glu-92, Asp-115, Leu-117, and Asp-118. Residues 118–121, Asn-211, Tyr-244, and Lys-274 contribute to the substrate site; that span reads DGSS. Glu-280 is a binding site for Mg(2+).

Belongs to the FBPase class 1 family. As to quaternary structure, homotetramer. The cofactor is Mg(2+).

It is found in the cytoplasm. The enzyme catalyses beta-D-fructose 1,6-bisphosphate + H2O = beta-D-fructose 6-phosphate + phosphate. Its pathway is carbohydrate biosynthesis; gluconeogenesis. In Aeromonas salmonicida (strain A449), this protein is Fructose-1,6-bisphosphatase class 1.